The chain runs to 317 residues: tRNA dimethylallyltransferase (317 aa).

Residue 14–21 (GPTASGKT) coordinates ATP. A substrate-binding site is contributed by 16-21 (TASGKT). Interaction with substrate tRNA regions lie at residues 39–42 (DSAL) and 163–167 (QRIQR).

It belongs to the IPP transferase family. As to quaternary structure, monomer. The cofactor is Mg(2+).

It carries out the reaction adenosine(37) in tRNA + dimethylallyl diphosphate = N(6)-dimethylallyladenosine(37) in tRNA + diphosphate. Catalyzes the transfer of a dimethylallyl group onto the adenine at position 37 in tRNAs that read codons beginning with uridine, leading to the formation of N6-(dimethylallyl)adenosine (i(6)A). This Stenotrophomonas maltophilia (strain K279a) protein is tRNA dimethylallyltransferase.